We begin with the raw amino-acid sequence, 917 residues long: Gamma-tubulin complex component 3 (917 aa).

This sequence belongs to the TUBGCP family. As to quaternary structure, gamma-tubulin small complex (Gamma TuSC) is a heterotetrameric complex which contains two molecules of gamma-tubulin, and one molecule each of Dgrip84 and Dgrip91. The gamma-tubulin in this complex binds preferentially to GDP over GTP.

It is found in the cytoplasm. The protein localises to the cytoskeleton. Its subcellular location is the microtubule organizing center. The protein resides in the centrosome. It localises to the perinuclear region. The protein is Gamma-tubulin complex component 3 of Drosophila melanogaster (Fruit fly).